The primary structure comprises 177 residues: Eggshell protein (177 aa).

The first 18 residues, 1-18 (MKQSLTLVFLVAIGYATA), serve as a signal peptide directing secretion. Tandem repeats lie at residues 25–41 (YSGG…CDSG), 42–59 (YGDS…CGGG), 60–75 (YGGG…DCGN), 76–91 (YGGG…DCGN), and 92–112 (YGGG…CGGG). The 5 X approximate tandem repeats stretch occupies residues 25–112 (YSGGYGGGCY…GCSGGNCGGG (88 aa)). Positions 149-166 (GSGKGKGGGKGGKGGKGG) are enriched in gly residues. The interval 149–177 (GSGKGKGGGKGGKGGKGGTYKPSHYGGGY) is disordered.

The sequence is that of Eggshell protein from Schistosoma mansoni (Blood fluke).